Here is a 583-residue protein sequence, read N- to C-terminus: Aspartyl protease APCB1 (583 aa).

The chain crosses the membrane as a helical span at residues leucine 83–proline 103. The 362-residue stretch at tyrosine 203–methionine 564 folds into the Peptidase A1 domain. Catalysis depends on residues aspartate 223 and aspartate 431.

It belongs to the peptidase A1 family. In terms of assembly, interacts with BAG6 and BAGP1.

It localises to the membrane. Involved in proteolytic processing of BAG6 and plant basal immunity. The chain is Aspartyl protease APCB1 from Arabidopsis thaliana (Mouse-ear cress).